The following is a 604-amino-acid chain: MARISFSYLCPASWYFTVPTVSPFLRQRVAFLGLFFISCLLLLMLIIDFRHWSASLPRDRQYERYLARVGELEATDTEDPNLNYGLVVDCGSSGSRIFVYFWPRHNGNPHDLLDIKQMRDRNSQPVVKKIKPGISAMADTPEHASDYLRPLLSFAAAHVPVKKHKETPLYILCTAGMRLLPERKQLAILADLVKDLPLEFDFLFSQSQAEVISGKQEGVYAWIGINFVLGRFDHEDESDAEATQELAAGRRRTVGILDMGGASLQIAYEVPTSTSVLPAKQEEAAKILLAEFNLGCDVQHTEHVYRVYVTTFLGFGGNFARQRYEDLVLNETLNKNRLLGQKTGLSPDNPFLDPCLPVGLTDVVERNSQVLHVRGRGDWVSCRAMLSPLLARSNTSQASLNGIYQSPIDFNNSEFYGFSEFFYCTEDVLRIGGRYHGPTFAKAAQDYCGMAWSVLTQRFKNGLFSSHADEHRLKYQCFKSAWMYQVLHEGFHFPYDYPNLRTAQLVYGREVQWTLGAILYKTRFLPLRDLRQEGVRQAHGSWFRLSFVYNHYLFFACILVVLLAIVLYLLRLRRIHHRQTRASAPLDLLWLEEVVPMMGVQVGP.

Over 1-28 (MARISFSYLCPASWYFTVPTVSPFLRQR) the chain is Cytoplasmic. The chain crosses the membrane as a helical span at residues 29 to 49 (VAFLGLFFISCLLLLMLIIDF). The Vesicular portion of the chain corresponds to 50 to 546 (RHWSASLPRD…QAHGSWFRLS (497 aa)). E217 functions as the Proton acceptor in the catalytic mechanism. N-linked (GlcNAc...) asparagine glycosylation occurs at N330. A disulfide bridge links C448 with C477. Residues 547-567 (FVYNHYLFFACILVVLLAIVL) traverse the membrane as a helical segment. Residues 568–604 (YLLRLRRIHHRQTRASAPLDLLWLEEVVPMMGVQVGP) are Cytoplasmic-facing.

Belongs to the GDA1/CD39 NTPase family. It depends on Ca(2+) as a cofactor. Requires Mg(2+) as cofactor.

It localises to the cytoplasmic vesicle membrane. The enzyme catalyses a ribonucleoside 5'-triphosphate + H2O = a ribonucleoside 5'-diphosphate + phosphate + H(+). The catalysed reaction is UTP + H2O = UDP + phosphate + H(+). It carries out the reaction GTP + H2O = GDP + phosphate + H(+). It catalyses the reaction CTP + H2O = CDP + phosphate + H(+). Catalyzes the hydrolysis of nucleoside triphosphates and diphosphates in a calcium- or magnesium-dependent manner. Preferentially hydrolyzes nucleoside 5'-triphosphates, with substrate preference for UTP &gt; GTP &gt; CTP. Hydrolyzes ATP and nucleoside diphosphates only to a minor extent. The protein is Ectonucleoside triphosphate diphosphohydrolase 7 (ENTPD7) of Pongo abelii (Sumatran orangutan).